Reading from the N-terminus, the 263-residue chain is Hemophilin (263 aa).

An N-terminal signal peptide occupies residues 1–20 (MKISQLFLGLVACSTAFAYA). 4 residues coordinate heme b: His-42, Tyr-58, Ser-104, and His-105.

Monomer in solution. Interacts with host hemoglobin.

The protein resides in the secreted. In terms of biological role, part of a high affinity heme acquisition system. Functions as a hemophore that acquires heme from human hemoglobin and delivers the heme to its cognate receptor, HphR, facilitating transport of heme across the bacterial outer membrane. Apo HphA interacts specifically with human hemoglobin and steals heme through a passive process probably due to its high affinity for heme. It can also acquire heme complexed to human serum albumin. Plays a supporting role for full virulence, acting as an accessory factor that enhances the process of heme uptake. This chain is Hemophilin, found in Acinetobacter baumannii.